Consider the following 228-residue polypeptide: 7-cyano-7-deazaguanine synthase (228 aa).

11–21 serves as a coordination point for ATP; it reads LSGGLDSATCL. 4 residues coordinate Zn(2+): Cys191, Cys201, Cys204, and Cys207.

It belongs to the QueC family. Requires Zn(2+) as cofactor.

The enzyme catalyses 7-carboxy-7-deazaguanine + NH4(+) + ATP = 7-cyano-7-deazaguanine + ADP + phosphate + H2O + H(+). The protein operates within purine metabolism; 7-cyano-7-deazaguanine biosynthesis. In terms of biological role, catalyzes the ATP-dependent conversion of 7-carboxy-7-deazaguanine (CDG) to 7-cyano-7-deazaguanine (preQ(0)). The protein is 7-cyano-7-deazaguanine synthase of Azoarcus sp. (strain BH72).